Consider the following 51-residue polypeptide: CKIPANAGNCNNHQERWFYNSHNRKCETFLYSGCGANPNNFKSEKQCESTC.

3 cysteine pairs are disulfide-bonded: Cys1/Cys51, Cys10/Cys34, and Cys26/Cys47.

Belongs to the venom Kunitz-type family. Sea anemone type 2 potassium channel toxin subfamily.

The protein localises to the secreted. It localises to the nematocyst. Its function is as follows. Weak serine protease inhibitor that has been tested on both trypsin and elastase. In vivo, is not lethal to zebrafish larvae. This is Kunitz-like toxin PcKuz2 from Palythoa caribaeorum (White encrusting zoanthid coral).